The chain runs to 60 residues: Toxin S4C8 (60 aa).

4 disulfides stabilise this stretch: Cys-3–Cys-22, Cys-17–Cys-39, Cys-41–Cys-52, and Cys-53–Cys-58. The tract at residues 41–48 is important for binding to L-type calcium channels; sequence CPTAMWPY.

The protein belongs to the three-finger toxin family. Short-chain subfamily. L-type calcium blocker sub-subfamily. As to expression, expressed by the venom gland.

Its subcellular location is the secreted. Its function is as follows. This specific blocker of the L-type calcium channel (Cav1/CACNA1) is a smooth muscle relaxant and an inhibitor of cardiac contractions. The polypeptide is Toxin S4C8 (Dendroaspis jamesoni kaimosae (Eastern Jameson's mamba)).